Consider the following 425-residue polypeptide: Serine--tRNA ligase (425 aa).

Residue 230–232 coordinates L-serine; that stretch reads TSE. 261-263 provides a ligand contact to ATP; that stretch reads RKE. Residue Glu-284 participates in L-serine binding. 348-351 lines the ATP pocket; it reads EISS. Ser-385 contacts L-serine.

The protein belongs to the class-II aminoacyl-tRNA synthetase family. Type-1 seryl-tRNA synthetase subfamily. Homodimer. The tRNA molecule binds across the dimer.

It localises to the cytoplasm. It catalyses the reaction tRNA(Ser) + L-serine + ATP = L-seryl-tRNA(Ser) + AMP + diphosphate + H(+). It carries out the reaction tRNA(Sec) + L-serine + ATP = L-seryl-tRNA(Sec) + AMP + diphosphate + H(+). The protein operates within aminoacyl-tRNA biosynthesis; selenocysteinyl-tRNA(Sec) biosynthesis; L-seryl-tRNA(Sec) from L-serine and tRNA(Sec): step 1/1. Its function is as follows. Catalyzes the attachment of serine to tRNA(Ser). Is also able to aminoacylate tRNA(Sec) with serine, to form the misacylated tRNA L-seryl-tRNA(Sec), which will be further converted into selenocysteinyl-tRNA(Sec). The protein is Serine--tRNA ligase of Wolbachia pipientis wMel.